A 244-amino-acid chain; its full sequence is Robin (244 aa).

In Acanthamoeba polyphaga (Amoeba), this protein is Robin.